The following is a 392-amino-acid chain: Phosphoglycerate kinase (392 aa).

Substrate is bound by residues 21 to 23 (DFN), Arg-36, 59 to 62 (HLGR), Arg-118, and Arg-151. ATP-binding positions include Lys-201, Gly-292, Glu-323, and 349–352 (GGDS).

The protein belongs to the phosphoglycerate kinase family. As to quaternary structure, monomer.

It is found in the cytoplasm. It catalyses the reaction (2R)-3-phosphoglycerate + ATP = (2R)-3-phospho-glyceroyl phosphate + ADP. It functions in the pathway carbohydrate degradation; glycolysis; pyruvate from D-glyceraldehyde 3-phosphate: step 2/5. This Borrelia duttonii (strain Ly) protein is Phosphoglycerate kinase.